The primary structure comprises 127 residues: MGKAAAPRALPENEAKAVARMLRVSPQKLNLVAQLIRGKKVATALADLQFSQKRIAVEVKKCLESAIANAENNHDLDVDDLVVKEAYVGKALVLKRFHARARGRGARILKPFSNLTIVVREVRAEAA.

This sequence belongs to the universal ribosomal protein uL22 family. Part of the 50S ribosomal subunit.

Functionally, this protein binds specifically to 23S rRNA; its binding is stimulated by other ribosomal proteins, e.g. L4, L17, and L20. It is important during the early stages of 50S assembly. It makes multiple contacts with different domains of the 23S rRNA in the assembled 50S subunit and ribosome. In terms of biological role, the globular domain of the protein is located near the polypeptide exit tunnel on the outside of the subunit, while an extended beta-hairpin is found that lines the wall of the exit tunnel in the center of the 70S ribosome. The polypeptide is Large ribosomal subunit protein uL22 (Methylobacterium nodulans (strain LMG 21967 / CNCM I-2342 / ORS 2060)).